The sequence spans 552 residues: B-cell linker protein (552 aa).

The disordered stretch occupies residues 50 to 431; the sequence is TGKDTWDRLK…SSISSISSTA (382 aa). Residues 67-76 are compositionally biased toward basic and acidic residues; that stretch reads PRRDYASEHA. Over residues 77 to 93 the composition is skewed to acidic residues; sequence DNEEEQWSDDFDSDYEN. 6 positions are modified to phosphotyrosine; by SYK: Y91, Y103, Y115, Y194, Y205, and Y249. The segment covering 188 to 205 has biased composition (acidic residues); it reads SDDEDNYIVPVDNDDDNY. 3 stretches are compositionally biased toward basic and acidic residues: residues 277–295, 309–322, and 368–382; these read NAEHSHMHSMTRESPKLDA, PKTDHEANNNDENH, and NEDKPTAADRRRGSS. The 108-residue stretch at 442–549 folds into the SH2 domain; that stretch reads WYAATCDRKT…KDSTKLKYIV (108 aa).

As to quaternary structure, associates with PLCG1, VAV1 and NCK1 in a B-cell antigen receptor-dependent fashion. Interacts through its SH2 domain with CD79A. Interacts with VAV3, PLCG2 and GRB2. Post-translationally, following BCR activation, phosphorylated on tyrosine residues by SYK and LYN. When phosphorylated, serves as a scaffold to assemble downstream targets of antigen activation, including PLCG1, VAV1, GRB2 and NCK1. Phosphorylation is required for both Ca(2+) and MAPK signaling pathways. Phosphorylation of Tyr-103, Tyr-194 and Tyr-205 facilitates PLCG1 binding. Phosphorylation of Tyr-115 facilitates BTK binding. Phosphorylation of Tyr-91 facilitates VAV1 and NCK1 binding. As to expression, highly expressed in the bursa, very low expression in ovary and spleen. Expression was variable among B-cell lines. Highly expressed in immature B-cell lines such as DT40 and CL18, low expression was seen in relatively mature B-cell lines, such as 293B9 and 249L4. No expression was seen in T-cell lines.

It is found in the cytoplasm. Its subcellular location is the cell membrane. Functions as a central linker protein, downstream of the B-cell receptor (BCR), bridging the SYK kinase to a multitude of signaling pathways and regulating biological outcomes of B-cell function and development. Plays a role in the activation of ERK/EPHB2, MAP kinase p38 and JNK. Modulates AP1 activation. Important for the activation of NF-kappa-B and NFAT. Plays an important role in BCR-mediated PLCG1 and PLCG2 activation and Ca(2+) mobilization and is required for trafficking of the BCR to late endosomes. However, does not seem to be required for pre-BCR-mediated activation of MAP kinase and phosphatidyl-inositol 3 (PI3) kinase signaling. May be required for the RAC1-JNK pathway. Plays a critical role in orchestrating the pro-B cell to pre-B cell transition. Plays a critical role in B-cell development in the bursa. Plays an important role in BCR-induced apoptosis. The polypeptide is B-cell linker protein (BLNK) (Gallus gallus (Chicken)).